A 451-amino-acid polypeptide reads, in one-letter code: Signal recognition particle protein (451 aa).

GTP contacts are provided by residues 107–114 (GLQGSGKT), 190–194 (DTAGR), and 248–251 (TKTD).

Belongs to the GTP-binding SRP family. SRP54 subfamily. In terms of assembly, part of the signal recognition particle protein translocation system, which is composed of SRP and FtsY. SRP is a ribonucleoprotein composed of Ffh and a 4.5S RNA molecule.

Its subcellular location is the cytoplasm. The enzyme catalyses GTP + H2O = GDP + phosphate + H(+). Its function is as follows. Involved in targeting and insertion of nascent membrane proteins into the cytoplasmic membrane. Binds to the hydrophobic signal sequence of the ribosome-nascent chain (RNC) as it emerges from the ribosomes. The SRP-RNC complex is then targeted to the cytoplasmic membrane where it interacts with the SRP receptor FtsY. Interaction with FtsY leads to the transfer of the RNC complex to the Sec translocase for insertion into the membrane, the hydrolysis of GTP by both Ffh and FtsY, and the dissociation of the SRP-FtsY complex into the individual components. The chain is Signal recognition particle protein from Buchnera aphidicola subsp. Acyrthosiphon pisum (strain APS) (Acyrthosiphon pisum symbiotic bacterium).